A 130-amino-acid chain; its full sequence is Small ribosomal subunit protein uS9 (130 aa).

The segment at Gly-102 to Arg-130 is disordered. Positions Lys-111–Arg-130 are enriched in basic residues.

This sequence belongs to the universal ribosomal protein uS9 family.

The sequence is that of Small ribosomal subunit protein uS9 from Finegoldia magna (strain ATCC 29328 / DSM 20472 / WAL 2508) (Peptostreptococcus magnus).